Consider the following 207-residue polypeptide: MKLPQAFYARDTRTVARALLGKVLVHLDGGVRRAARIVETEAYHGPDDRASHARAGPTPRAAIMFGPPGRAYVYLIYGTSHCMNVVTGPEGFPSAVLIRAAEPIEGCLHSTRGPGNLCRALAIRREHDNGRDLWGEELFIEDAPAPREAVVTGPRVNVGYAGPWAARPWRFALRGSAWVSRPAPAGARAARAPAPAPRPRRPRGSGP.

Positions 182–193 are enriched in low complexity; sequence PAPAGARAARAP. A disordered region spans residues 182–207; it reads PAPAGARAARAPAPAPRPRRPRGSGP. A compositionally biased stretch (basic residues) spans 198 to 207; it reads RPRRPRGSGP.

It belongs to the DNA glycosylase MPG family.

This chain is Putative 3-methyladenine DNA glycosylase, found in Anaeromyxobacter dehalogenans (strain 2CP-C).